The following is a 301-amino-acid chain: N-acetylmuramic acid 6-phosphate etherase (301 aa).

Positions isoleucine 55 to lysine 215 constitute an SIS domain. Glutamate 83 acts as the Proton donor in catalysis. Residue glutamate 111 is part of the active site.

Belongs to the GCKR-like family. MurNAc-6-P etherase subfamily. In terms of assembly, homodimer.

It carries out the reaction N-acetyl-D-muramate 6-phosphate + H2O = N-acetyl-D-glucosamine 6-phosphate + (R)-lactate. Its pathway is amino-sugar metabolism; 1,6-anhydro-N-acetylmuramate degradation. It functions in the pathway amino-sugar metabolism; N-acetylmuramate degradation. The protein operates within cell wall biogenesis; peptidoglycan recycling. Its function is as follows. Specifically catalyzes the cleavage of the D-lactyl ether substituent of MurNAc 6-phosphate, producing GlcNAc 6-phosphate and D-lactate. Together with AnmK, is also required for the utilization of anhydro-N-acetylmuramic acid (anhMurNAc) either imported from the medium or derived from its own cell wall murein, and thus plays a role in cell wall recycling. The chain is N-acetylmuramic acid 6-phosphate etherase from Burkholderia lata (strain ATCC 17760 / DSM 23089 / LMG 22485 / NCIMB 9086 / R18194 / 383).